Here is a 309-residue protein sequence, read N- to C-terminus: Methionyl-tRNA formyltransferase (309 aa).

Residue Ser-107–Pro-110 participates in (6S)-5,6,7,8-tetrahydrofolate binding.

This sequence belongs to the Fmt family.

The enzyme catalyses L-methionyl-tRNA(fMet) + (6R)-10-formyltetrahydrofolate = N-formyl-L-methionyl-tRNA(fMet) + (6S)-5,6,7,8-tetrahydrofolate + H(+). Functionally, attaches a formyl group to the free amino group of methionyl-tRNA(fMet). The formyl group appears to play a dual role in the initiator identity of N-formylmethionyl-tRNA by promoting its recognition by IF2 and preventing the misappropriation of this tRNA by the elongation apparatus. The sequence is that of Methionyl-tRNA formyltransferase from Borrelia duttonii (strain Ly).